We begin with the raw amino-acid sequence, 253 residues long: 5'/3'-nucleotidase SurE (253 aa).

A divalent metal cation is bound by residues aspartate 8, aspartate 9, serine 39, and asparagine 92.

This sequence belongs to the SurE nucleotidase family. A divalent metal cation serves as cofactor.

It localises to the cytoplasm. It carries out the reaction a ribonucleoside 5'-phosphate + H2O = a ribonucleoside + phosphate. It catalyses the reaction a ribonucleoside 3'-phosphate + H2O = a ribonucleoside + phosphate. The enzyme catalyses [phosphate](n) + H2O = [phosphate](n-1) + phosphate + H(+). Its function is as follows. Nucleotidase with a broad substrate specificity as it can dephosphorylate various ribo- and deoxyribonucleoside 5'-monophosphates and ribonucleoside 3'-monophosphates with highest affinity to 3'-AMP. Also hydrolyzes polyphosphate (exopolyphosphatase activity) with the preference for short-chain-length substrates (P20-25). Might be involved in the regulation of dNTP and NTP pools, and in the turnover of 3'-mononucleotides produced by numerous intracellular RNases (T1, T2, and F) during the degradation of various RNAs. This Salmonella paratyphi A (strain AKU_12601) protein is 5'/3'-nucleotidase SurE.